Reading from the N-terminus, the 220-residue chain is UPF0441 protein Spro_4274 (220 aa).

The segment at 181–220 (MAPKPAVTNTVTRGGFGESVAKQTSMQRSSATSSSRSMGG) is disordered. Low complexity predominate over residues 203–220 (QTSMQRSSATSSSRSMGG).

The protein belongs to the UPF0441 family.

In Serratia proteamaculans (strain 568), this protein is UPF0441 protein Spro_4274.